Here is a 454-residue protein sequence, read N- to C-terminus: Putative serine/threonine-protein phosphatase C27B7.6 (454 aa).

Mn(2+) is bound by residues Asp-65, His-67, Asp-93, and Asn-125. The active-site Proton donor is the His-126. Mn(2+) is bound by residues His-174 and His-252. Residues 414–454 (RKKLGMTTSTTPPPPRTPSPDAPLAQSPPIPRSPPSSTENA) are disordered. Residues 424–447 (TPPPPRTPSPDAPLAQSPPIPRSP) are compositionally biased toward pro residues.

The protein belongs to the PPP phosphatase family. PP-1 subfamily. Requires Mn(2+) as cofactor.

The catalysed reaction is O-phospho-L-seryl-[protein] + H2O = L-seryl-[protein] + phosphate. It catalyses the reaction O-phospho-L-threonyl-[protein] + H2O = L-threonyl-[protein] + phosphate. The polypeptide is Putative serine/threonine-protein phosphatase C27B7.6 (Caenorhabditis elegans).